An 862-amino-acid chain; its full sequence is Cell surface glycoprotein (862 aa).

Positions 1 to 34 are cleaved as a signal peptide; the sequence is MTDTQQKIKAVLLTVLMVTSVFAATIAFSGAAAA. Disordered stretches follow at residues 35–60, 101–126, and 200–220; these read SERG…SAGN, ILLE…EGTE, and VNTN…DRDD. The segment covering 43-57 has biased composition (polar residues); the sequence is YTTGPTDGNQDNVDS. Residues 206-220 show a composition bias toward basic and acidic residues; the sequence is NDDHPNPAADGDRDD. N-linked (GlcNAc...) asparagine glycans are attached at residues Asn442, Asn520, Asn550, Asn702, and Asn761. The interval 752–838 is disordered; the sequence is LSDENVEPGN…TEEATTEATG (87 aa). Residues 784-801 show a composition bias toward acidic residues; the sequence is SLEEEQPATDTPEPDTDT. Positions 802–815 are enriched in low complexity; sequence PEPATDTPEPATDT. The segment covering 816–833 has biased composition (acidic residues); the sequence is PEPDTDTPEPDTETEEAT. Residues 838–858 form a helical membrane-spanning segment; that stretch reads GPGFTAAIALIALVAAALLAV. Residues 839–841 carry the PGF sorting signal motif; that stretch reads PGF.

It belongs to the halobacterial S-layer protein family. Post-translationally, glycosylated. In terms of processing, cleaved by the archaeosortase ArtA at the C-terminus, with removal of a short hydrophobic segment. Lipidation.

It localises to the secreted. The protein resides in the cell wall. It is found in the S-layer. The protein localises to the cell membrane. S-layer protein. The S-layer is a paracrystalline mono-layered assembly of proteins which coat the surface of the cell. This is Cell surface glycoprotein from Haloarcula japonica (strain ATCC 49778 / DSM 6131 / JCM 7785 / NBRC 101032 / NCIMB 13157 / TR-1).